Here is an 871-residue protein sequence, read N- to C-terminus: MGRLPVLLLWLAWWLSQAGIACGAGSVRLAGGLTLGGLFPVHARGAAGRACGALKKEQGVHRLEAMLYALDRVNADPELLPGVRLGARLLDTCSRDTYALEQALSFVQALIRGRGDGDEASVRCPGGVPPLRSAPPERVVAVVGASASSVSIMVANVLRLFAIPQISYASTAPELSDSTRYDFFSRVVPPDSYQAQAMVDIVRALGWNYVSTLASEGNYGESGVEAFVQISREAGGVCIAQSIKIPREPKPGEFHKVIRRLMETPNARGIIIFANEDDIRRVLEATRQANLTGHFLWVGSDSWGSKISPILNLEEEAVGAITILPKRASIDGFDQYFMTRSLENNRRNIWFAEFWEENFNCKLTSSGGQSDDSTRKCTGEERIGQDSAYEQEGKVQFVIDAVYAIAHALHSMHQALCPGHTGLCPAMEPTDGRTLLHYIRAVRFNGSAGTPVMFNENGDAPGRYDIFQYQATNGSASSGGYQAVGQWAEALRLDMEVLRWSGDPHEVPPSQCSLPCGPGERKKMVKGVPCCWHCEACDGYRFQVDEFTCEACPGDMRPTPNHTGCRPTPVVRLTWSSPWAALPLLLAVLGIMATTTIMATFMRHNDTPIVRASGRELSYVLLTGIFLIYAITFLMVAEPCAAICAARRLLLGLGTTLSYSALLTKTNRIYRIFEQGKRSVTPPPFISPTSQLVITFGLTSLQVVGVIAWLGAQPPHSVIDYEEQRTVDPEQARGVLKCDMSDLSLIGCLGYSLLLMVTCTVYAIKARGVPETFNEAKPIGFTMYTTCIIWLAFVPIFFGTAQSAEKIYIQTTTLTVSLSLSASVSLGMLYVPKTYVILFHPEQNVQKRKRSLKKTSTMAAPPQNENAEDAK.

Residues 1–23 form the signal peptide; the sequence is MGRLPVLLLWLAWWLSQAGIACG. The Extracellular segment spans residues 24–579; it reads AGSVRLAGGL…VVRLTWSSPW (556 aa). C51 and C93 are oxidised to a cystine. L-glutamate is bound by residues S148, 169–171, and Y219; that span reads AST. 7 disulfide bridges follow: C238–C530, C361–C377, C417–C424, C512–C531, C516–C534, C537–C549, and C552–C565. N290 is a glycosylation site (N-linked (GlcNAc...) asparagine). D301 serves as a coordination point for L-glutamate. An L-glutamate-binding site is contributed by K394. N-linked (GlcNAc...) asparagine glycans are attached at residues N445 and N473. N561 carries an N-linked (GlcNAc...) asparagine glycan. A helical transmembrane segment spans residues 580–602; the sequence is AALPLLLAVLGIMATTTIMATFM. The Cytoplasmic portion of the chain corresponds to 603-616; that stretch reads RHNDTPIVRASGRE. The chain crosses the membrane as a helical span at residues 617–637; sequence LSYVLLTGIFLIYAITFLMVA. The Extracellular portion of the chain corresponds to 638–648; sequence EPCAAICAARR. The helical transmembrane segment at 649–667 threads the bilayer; sequence LLLGLGTTLSYSALLTKTN. Over 668–691 the chain is Cytoplasmic; it reads RIYRIFEQGKRSVTPPPFISPTSQ. The helical transmembrane segment at 692–712 threads the bilayer; sequence LVITFGLTSLQVVGVIAWLGA. Topologically, residues 713–742 are extracellular; the sequence is QPPHSVIDYEEQRTVDPEQARGVLKCDMSD. The helical transmembrane segment at 743–764 threads the bilayer; that stretch reads LSLIGCLGYSLLLMVTCTVYAI. The Cytoplasmic segment spans residues 765-777; sequence KARGVPETFNEAK. Residues 778 to 800 traverse the membrane as a helical segment; that stretch reads PIGFTMYTTCIIWLAFVPIFFGT. Residues 801–813 are Extracellular-facing; the sequence is AQSAEKIYIQTTT. The chain crosses the membrane as a helical span at residues 814–839; the sequence is LTVSLSLSASVSLGMLYVPKTYVILF. Residues 840–871 are Cytoplasmic-facing; that stretch reads HPEQNVQKRKRSLKKTSTMAAPPQNENAEDAK. A disordered region spans residues 850–871; that stretch reads RSLKKTSTMAAPPQNENAEDAK.

It belongs to the G-protein coupled receptor 3 family. Homodimer. Interacts with GPR179. Interacts with photoreceptor synaptic protein LRIT1 (via its N-terminal extracellular domain). As to expression, restricted expression in the inner nuclear layer of the retina.

The protein localises to the cell membrane. It is found in the endoplasmic reticulum membrane. Its subcellular location is the golgi apparatus membrane. The protein resides in the cell projection. It localises to the dendrite. Functionally, G-protein coupled receptor for glutamate. Ligand binding causes a conformation change that triggers signaling via guanine nucleotide-binding proteins (G proteins) and modulates the activity of down-stream effectors, such as adenylate cyclase. Signaling inhibits adenylate cyclase activity. Signaling stimulates TRPM1 channel activity and Ca(2+) uptake. Required for normal vision. This is Metabotropic glutamate receptor 6 (Grm6) from Rattus norvegicus (Rat).